A 105-amino-acid polypeptide reads, in one-letter code: UPF0235 protein Mext_2130 (105 aa).

This sequence belongs to the UPF0235 family.

In Methylorubrum extorquens (strain PA1) (Methylobacterium extorquens), this protein is UPF0235 protein Mext_2130.